The sequence spans 348 residues: Uroporphyrinogen decarboxylase (348 aa).

Residues 27-31 (RQAGR), F46, D76, Y152, S207, and H320 each bind substrate.

It belongs to the uroporphyrinogen decarboxylase family. As to quaternary structure, homodimer.

It localises to the cytoplasm. The enzyme catalyses uroporphyrinogen III + 4 H(+) = coproporphyrinogen III + 4 CO2. Its pathway is porphyrin-containing compound metabolism; protoporphyrin-IX biosynthesis; coproporphyrinogen-III from 5-aminolevulinate: step 4/4. In terms of biological role, catalyzes the decarboxylation of four acetate groups of uroporphyrinogen-III to yield coproporphyrinogen-III. The polypeptide is Uroporphyrinogen decarboxylase (Bacillus cereus (strain AH820)).